Consider the following 353-residue polypeptide: N-acetyl-gamma-glutamyl-phosphate reductase (353 aa).

Cys157 is an active-site residue.

Belongs to the NAGSA dehydrogenase family. Type 1 subfamily.

It localises to the cytoplasm. It catalyses the reaction N-acetyl-L-glutamate 5-semialdehyde + phosphate + NADP(+) = N-acetyl-L-glutamyl 5-phosphate + NADPH + H(+). The protein operates within amino-acid biosynthesis; L-arginine biosynthesis; N(2)-acetyl-L-ornithine from L-glutamate: step 3/4. Functionally, catalyzes the NADPH-dependent reduction of N-acetyl-5-glutamyl phosphate to yield N-acetyl-L-glutamate 5-semialdehyde. The chain is N-acetyl-gamma-glutamyl-phosphate reductase from Bordetella avium (strain 197N).